The sequence spans 851 residues: MNSTDKLDSHTPMMQQYLRLKAQHPEILLFYRMGDFYELFYDDAKRASQLLDISLTKRGASAGEPIPMAGVPHHAVENYLAKLVQLGESVALCEQIGDPATSKGPVERKVVRIVTPGTITDEALLQERQDNLLAAIWQDARGFGYATLDISSGRFRVAEPADIETMAAELQRTNPAELLYPETFEQMSLIEQRHGLRRRPLWEFEPETARQQLNLQFGTRDLTGFGVEQAHQALRAAGCLLQYVKDTQRTSLPHIRGITMERQQDGIIMDAATRRNLELTQNLSGGSENTLAAILDRSVTAMGSRMLKRWLHMPTRDIKVLNNRQQAIGSLQDLYSDLQPSLRQVGDLERILARLALRSARPRDLARMRHAFQQLPDIHALLKGVETPYVQQLLSQVGQFDELQDLLERAVVEAPPVLVRDGGVIAPGYNSELDEWRALADGATDYLDRLEIREREKLGLDTLKVGFNGVHGYYIQVSRGQSHLVPIHYVRRQTLKNAERYIIPELKEYEDKVLTSKGKALAIEKGLYEELFDLLLPHLGDLQQSAAALAELDVLANLAERAETLNYACPTISEQPGVRITEGRHPVVEQVLSEPFISNPLSLSPQRRMLIITGPNMGGKSTYMRQTALIVLMAHIGSYVPASKAVIGPVDRIFTRVGAADDLASGRSTFMVEMTETANILHNATENSLVLMDEIGRGTSTYDGLSLAWACAENLASRIKAMTLFATHYFELTTLPEKMEGVVNVHLDALEHGDTIAFMHSVQDGAASKSYGLAVAALAGVPREVIKRARQKLRELEAISSHTATGTVDATQMTLLNEETSPAVEALEALDPDSLSPRQALEWIYRLKNMV.

Residue 614–621 coordinates ATP; the sequence is GPNMGGKS.

It belongs to the DNA mismatch repair MutS family.

This protein is involved in the repair of mismatches in DNA. It is possible that it carries out the mismatch recognition step. This protein has a weak ATPase activity. This chain is DNA mismatch repair protein MutS, found in Serratia proteamaculans (strain 568).